The following is a 178-amino-acid chain: Peptidyl-prolyl cis-trans isomerase (178 aa).

A signal peptide spans M1 to A17. The region spanning F26–L177 is the PPIase cyclophilin-type domain.

The protein belongs to the cyclophilin-type PPIase family. PPIase A subfamily.

The enzyme catalyses [protein]-peptidylproline (omega=180) = [protein]-peptidylproline (omega=0). Functionally, PPIases accelerate the folding of proteins. It catalyzes the cis-trans isomerization of proline imidic peptide bonds in oligopeptides. Up-regulates interferon gamma production by bovine T-cells. Stimulates high levels of IFN-gamma production by peripheral blood mononuclear cells and T-cells. The IFN-gamma-inducing effect is blocked by cyclosporin A (CsA). This Neospora caninum (Coccidian parasite) protein is Peptidyl-prolyl cis-trans isomerase.